Reading from the N-terminus, the 120-residue chain is Small ribosomal subunit protein eS24 (120 aa).

The disordered stretch occupies residues Arg101–Gly120.

This sequence belongs to the eukaryotic ribosomal protein eS24 family.

The protein is Small ribosomal subunit protein eS24 of Saccharolobus solfataricus (strain ATCC 35092 / DSM 1617 / JCM 11322 / P2) (Sulfolobus solfataricus).